The primary structure comprises 383 residues: GTP-binding protein 10 homolog (383 aa).

The 136-residue stretch at 22–157 folds into the Obg domain; sequence PSFLDTLRLA…RIVNLDLKLI (136 aa). Residues 158 to 353 form the OBG-type G domain; the sequence is ADVGLVGFPN…VKSQLRRTLV (196 aa). GTP is bound by residues 164–171, 211–215, and 287–290; these read GFPNAGKS, DLPGL, and NKMD.

The protein belongs to the TRAFAC class OBG-HflX-like GTPase superfamily. OBG GTPase family.

Its subcellular location is the nucleus. The protein resides in the nucleolus. Functionally, may be involved in the ribosome maturation process. In Drosophila pseudoobscura pseudoobscura (Fruit fly), this protein is GTP-binding protein 10 homolog.